Here is a 90-residue protein sequence, read N- to C-terminus: Probable Fe(2+)-trafficking protein (90 aa).

This sequence belongs to the Fe(2+)-trafficking protein family.

Its function is as follows. Could be a mediator in iron transactions between iron acquisition and iron-requiring processes, such as synthesis and/or repair of Fe-S clusters in biosynthetic enzymes. The protein is Probable Fe(2+)-trafficking protein of Haemophilus influenzae (strain PittEE).